The chain runs to 246 residues: uncharacterized protein (246 aa).

This is an uncharacterized protein from Campylobacter jejuni subsp. jejuni serotype O:2 (strain ATCC 700819 / NCTC 11168).